A 144-amino-acid chain; its full sequence is Transcription antitermination protein NusB (144 aa).

Belongs to the NusB family.

Involved in transcription antitermination. Required for transcription of ribosomal RNA (rRNA) genes. Binds specifically to the boxA antiterminator sequence of the ribosomal RNA (rrn) operons. The sequence is that of Transcription antitermination protein NusB from Haemophilus influenzae (strain PittGG).